Here is a 956-residue protein sequence, read N- to C-terminus: F-box only protein 10 (956 aa).

The F-box domain maps to 1–48 (MEAGGLPLELWRMILAYLHLPDLGRCSLVCRAWYELILSLDSTRWRQL). PbH1 repeat units follow at residues 198 to 217 (SGHV…QVHG) and 238 to 260 (VPLC…TVEG). The segment at 314–367 (EGSQSPTSPASSSPKPGSKAGSQEAEVGSDGERVAQTPDSSDGGLSPSGEDEDE) is disordered. 2 stretches are compositionally biased toward low complexity: residues 316–336 (SQSP…AGSQ) and 351–361 (PDSSDGGLSPS). Phosphoserine occurs at positions 321 and 326. PbH1 repeat units lie at residues 427–448 (VQGC…FVCS), 449–470 (HGRA…RCIH), 471–493 (NSKI…FLRL), 494–516 (EGGG…DIRK), 538–560 (LGNG…GIYI), 561–583 (LYHG…GIAV), 584–606 (NENG…GVDI), 607–629 (RRGG…GVVV), 630–652 (GDEG…GVWM), 653–675 (MSSS…GVAV), 717–739 (RPIT…GLYV), 740–762 (QSSE…GITV), 764–786 (QSSQ…GVKV), 787–809 (EAQC…GIIT), and 832–854 (LPRS…GIAV).

In terms of assembly, component of the SCF(FBXO10) complex consisting of CUL1, SKP1 and FBXO10. Interacts with BCL2. Interacts with PRDM1.

The protein resides in the cytoplasm. It functions in the pathway protein modification; protein ubiquitination. In terms of biological role, substrate-recognition component of the SCF (SKP1-CUL1-F-box protein)-type E3 ubiquitin ligase complex. Mediates the ubiquitination and degradation of BCL2, an antiapoptotic protein, thereby playing a role in apoptosis by controlling the stability of BCL2. Targets also the receptor for advanced glycation end products RAGE for ubiquitination and subsequent lysosomal degradation. Directly controls HGAL/GCSAM ubiquitination and degradation and thereby decreases BCR signaling. This Homo sapiens (Human) protein is F-box only protein 10 (FBXO10).